The chain runs to 98 residues: Alpha-elicitin capsicein (98 aa).

3 cysteine pairs are disulfide-bonded: C3–C71, C27–C56, and C51–C95.

It belongs to the elicitin family.

The protein localises to the secreted. Induces local and distal defense responses (incompatible hypersensitive reaction) in plants from the solanaceae and cruciferae families. Elicits leaf necrosis and causes the accumulation of pathogenesis-related proteins. Might interact with the lipidic molecules of the plasma membrane. The sequence is that of Alpha-elicitin capsicein from Phytophthora capsici.